Consider the following 1503-residue polypeptide: EF-hand calcium-binding domain-containing protein 5 (1503 aa).

The tract at residues 1–23 is disordered; the sequence is MNESASQEELRPAQENRKEDKER. Basic and acidic residues predominate over residues 8–23; the sequence is EELRPAQENRKEDKER. Serine 77 is subject to Phosphoserine. Disordered regions lie at residues 477–518, 544–656, and 730–750; these read ASKT…EQGP, IEPG…QGPY, and FPET…KSQK. The span at 549-561 shows a compositional bias: polar residues; it reads HTESTLEQGSSRR. Composition is skewed to basic and acidic residues over residues 562-582 and 607-622; these read LLTE…HKGS and GSRR…HKGS. One can recognise an EF-hand domain in the interval 869-904; it reads RQRLLLEAIFQKWDSDGSGFLDLKEVDELLYTYKEG. Ca(2+) contacts are provided by aspartate 882, aspartate 884, serine 886, and glutamate 893.

This is EF-hand calcium-binding domain-containing protein 5 (EFCAB5) from Homo sapiens (Human).